The primary structure comprises 850 residues: Protein argonaute 8 (850 aa).

Residues 1–30 (MDTTLPPPQHMEREPLKSKSSLLPMTRRGN) are disordered. The 115-residue stretch at 247-361 (PVVDFLIANQ…FPIELCELVS (115 aa)) folds into the PAZ domain. One can recognise a Piwi domain in the interval 518–811 (QSILGEVPPK…AAAQMATAMK (294 aa)).

Belongs to the argonaute family. Ago subfamily.

Its function is as follows. Involved in RNA-mediated post-transcriptional gene silencing (PTGS). Main component of the RNA-induced silencing complex (RISC) that binds to a short guide RNA such as a microRNA (miRNA) or small interfering RNA (siRNA). RISC uses the mature miRNA or siRNA as a guide for slicer-directed cleavage of homologous mRNAs to repress gene expression. This Arabidopsis thaliana (Mouse-ear cress) protein is Protein argonaute 8 (AGO8).